The following is a 566-amino-acid chain: Amino acid transporter 6-1 (566 aa).

The next 11 membrane-spanning stretches (helical) occupy residues 65-85, 137-157, 158-178, 187-207, 216-236, 250-270, 334-354, 367-387, 392-412, 423-443, and 455-475; these read YVLL…FYGW, MTFA…DWLG, PLWT…FLAF, YPAL…TLCI, GLII…PLVL, VSIG…LLFM, FFSI…WATS, DVVS…ILLG, VVGI…TYVF, LSAC…YVYV, and LIGI…PLYE. Residue Asn476 is glycosylated (N-linked (GlcNAc...) asparagine). The chain crosses the membrane as a helical span at residues 489–509; the sequence is IQIAMTALLCVQYVWIFILGF.

This sequence belongs to the SLC43A transporter (TC 2.A.1.44) family.

It is found in the cell membrane. It carries out the reaction L-lysine(in) = L-lysine(out). The catalysed reaction is L-arginine(in) = L-arginine(out). The enzyme catalyses L-methionine(in) = L-methionine(out). It catalyses the reaction L-leucine(in) = L-leucine(out). Its function is as follows. Cationic and neutral amino acid transporter. Transports lysine with high affinity. Can transport arginine, methionine and leucine. Does not require inorganic ions, such as sodium, chloride, potassium, calcium or magnesium, for transport activity. In Toxoplasma gondii (strain ATCC 50611 / Me49), this protein is Amino acid transporter 6-1.